A 258-amino-acid polypeptide reads, in one-letter code: Thyroxine 5-deiodinase (258 aa).

Residues 1-20 (AACILLFPRFLLTAVMLWLL) traverse the membrane as a helical; Signal-anchor for type II membrane protein segment. Residues 21 to 258 (DFLCIRKKML…QSPGAVVIQV (238 aa)) lie on the Extracellular side of the membrane. Sec122 is a catalytic residue. Position 122 (Sec122) is a non-standard amino acid, selenocysteine.

Belongs to the iodothyronine deiodinase family. In terms of assembly, monomer. Homodimer. May undergo minor heretodimerization with DIO1 and DIO2.

The protein resides in the cell membrane. It localises to the endosome membrane. It catalyses the reaction 3,3',5'-triiodo-L-thyronine + iodide + A + H(+) = L-thyroxine + AH2. It carries out the reaction 3,3'-diiodo-L-thyronine + iodide + A + H(+) = 3,3',5-triiodo-L-thyronine + AH2. The enzyme catalyses 3-iodo-L-thyronine + iodide + A + H(+) = 3,5-diiodo-L-thyronine + AH2. The catalysed reaction is L-thyronine + iodide + A + H(+) = 3-iodo-L-thyronine + AH2. It catalyses the reaction 3',5'-diiodo-L-thyronine + iodide + A + H(+) = 3,3',5'-triiodo-L-thyronine + AH2. It carries out the reaction 3'-iodo-L-thyronine + iodide + A + H(+) = 3,3'-diiodo-L-thyronine + AH2. The enzyme catalyses 3,3',5'-triiodothyronamine + iodide + A + H(+) = 3,3',5,5'-tetraiodothyronamine + AH2. The catalysed reaction is 3',5'-diiodothyronamine + iodide + A + H(+) = 3,3',5'-triiodothyronamine + AH2. It catalyses the reaction 3,3'-diiodothyronamine + iodide + A + H(+) = 3,3',5-triiodothyronamine + AH2. It carries out the reaction 3-iodothyronamine + iodide + A + H(+) = 3,5-diiodothyronamine + AH2. The enzyme catalyses 3'-iodothyronamine + iodide + A + H(+) = 3,3'-diiodothyronamine + AH2. The catalysed reaction is thyronamine + iodide + A + H(+) = 3-iodothyronamine + AH2. Its function is as follows. Plays a crucial role in the metabolism of thyroid hormones (TH) and has specific roles in TH activation and inactivation by deiodination. Catalyzes the deiodination of L-thyroxine (T4) to 3,3',5'-triiodothyronine (rT3) and 3,5,3'-triiodothyronine (T3) to 3,3'-diiodothyronine (3,3'-T2) via inner-ring deiodination (IRD). Catalyzes the deiodination of rT3 to 3',5'-diiodothyronine (3',5'-T2), 3,3'-T2 to 3'-monoiodothyronine (3'-T1) and 3,5-diiodothyronine (3,5-T2) to 3-monoiodothyronine (3-T1) via IRD. Catalyzes the deiodination of 3-T1 to L-thyronine (T0) via outer-ring deiodination (ORD). Catalyzes the tyrosyl ring deiodinations of 3,3',5,5'-tetraiodothyronamine, 3,3',5'-triiodothyronamine, 3,5,3'-triiodothyronamine, 3,5-diiodothyronamine, 3,3'-diiodothyronamine and 3-iodothyronamine. The chain is Thyroxine 5-deiodinase (DIO3) from Gallus gallus (Chicken).